A 58-amino-acid polypeptide reads, in one-letter code: UPF0391 membrane protein GM21_0108 (58 aa).

Helical transmembrane passes span 4–24 (WALI…GGIA) and 33–53 (VLFY…LLAG).

This sequence belongs to the UPF0391 family.

It localises to the cell membrane. This chain is UPF0391 membrane protein GM21_0108, found in Geobacter sp. (strain M21).